We begin with the raw amino-acid sequence, 319 residues long: Acetyl-coenzyme A carboxylase carboxyl transferase subunit alpha (319 aa).

In terms of domain architecture, CoA carboxyltransferase C-terminal spans Asn-32–Ala-293.

It belongs to the AccA family. Acetyl-CoA carboxylase is a heterohexamer composed of biotin carboxyl carrier protein (AccB), biotin carboxylase (AccC) and two subunits each of ACCase subunit alpha (AccA) and ACCase subunit beta (AccD).

The protein resides in the cytoplasm. The catalysed reaction is N(6)-carboxybiotinyl-L-lysyl-[protein] + acetyl-CoA = N(6)-biotinyl-L-lysyl-[protein] + malonyl-CoA. The protein operates within lipid metabolism; malonyl-CoA biosynthesis; malonyl-CoA from acetyl-CoA: step 1/1. In terms of biological role, component of the acetyl coenzyme A carboxylase (ACC) complex. First, biotin carboxylase catalyzes the carboxylation of biotin on its carrier protein (BCCP) and then the CO(2) group is transferred by the carboxyltransferase to acetyl-CoA to form malonyl-CoA. The sequence is that of Acetyl-coenzyme A carboxylase carboxyl transferase subunit alpha from Xanthomonas oryzae pv. oryzae (strain MAFF 311018).